A 472-amino-acid polypeptide reads, in one-letter code: Siroheme synthase 1 (472 aa).

Positions 1 to 203 (MDYLPLFADL…GQLAQAEEEL (203 aa)) are precorrin-2 dehydrogenase /sirohydrochlorin ferrochelatase. NAD(+) contacts are provided by residues 22–23 (EV) and 43–44 (QT). Ser128 carries the post-translational modification Phosphoserine. Positions 215–472 (GEVALVGAGP…AISPSVVNLA (258 aa)) are uroporphyrinogen-III C-methyltransferase. Pro224 contributes to the S-adenosyl-L-methionine binding site. Asp247 serves as the catalytic Proton acceptor. Residue Lys269 is the Proton donor of the active site. S-adenosyl-L-methionine-binding positions include 300 to 302 (GGD), Ile305, 330 to 331 (TA), Met382, and Gly411.

The protein in the N-terminal section; belongs to the precorrin-2 dehydrogenase / sirohydrochlorin ferrochelatase family. This sequence in the C-terminal section; belongs to the precorrin methyltransferase family.

The enzyme catalyses uroporphyrinogen III + 2 S-adenosyl-L-methionine = precorrin-2 + 2 S-adenosyl-L-homocysteine + H(+). It carries out the reaction precorrin-2 + NAD(+) = sirohydrochlorin + NADH + 2 H(+). It catalyses the reaction siroheme + 2 H(+) = sirohydrochlorin + Fe(2+). It participates in cofactor biosynthesis; adenosylcobalamin biosynthesis; precorrin-2 from uroporphyrinogen III: step 1/1. Its pathway is cofactor biosynthesis; adenosylcobalamin biosynthesis; sirohydrochlorin from precorrin-2: step 1/1. It functions in the pathway porphyrin-containing compound metabolism; siroheme biosynthesis; precorrin-2 from uroporphyrinogen III: step 1/1. The protein operates within porphyrin-containing compound metabolism; siroheme biosynthesis; siroheme from sirohydrochlorin: step 1/1. It participates in porphyrin-containing compound metabolism; siroheme biosynthesis; sirohydrochlorin from precorrin-2: step 1/1. Multifunctional enzyme that catalyzes the SAM-dependent methylations of uroporphyrinogen III at position C-2 and C-7 to form precorrin-2 via precorrin-1. Then it catalyzes the NAD-dependent ring dehydrogenation of precorrin-2 to yield sirohydrochlorin. Finally, it catalyzes the ferrochelation of sirohydrochlorin to yield siroheme. This is Siroheme synthase 1 from Yersinia enterocolitica serotype O:8 / biotype 1B (strain NCTC 13174 / 8081).